We begin with the raw amino-acid sequence, 1309 residues long: MKPVRRGQTDTALDISSHAKTNGDFIKKMNTTDSKRLKLLEDLKGKLEVECKIRDGAETLLQVFDTNFKKETKERKEMLKKKCTDELESSKKKIEELVSSIESFQGENGEAKTGSTSLTRSASATVSRKSSLQEKYSTRFSYKAGCSDSCSVTVSGTGELIGPTRNAHSNLTPTVIQRIDFENVNEKNNSSSEDTQPNGKRPSSLQSNFSQFPLNPWLDNIYKACLEGSMKDVIDSSNNLCEYLHEHSDPAYAKNFSLITPTILSMLELNVSEVTASVYRLLRHLFLDATAFSCCQMLNLPWILSKSLLSGTDAYQIEREQAFRLIRTLYFLSSTEGHEDYLSGITRTIISICEHVSDVSRGIAVETLIELMIIRPKILFKANGLRVLMISLIDGSISENLAASAALALVYLLDDPESACYVNLPYDIGILLSPFTSSSSRDTFNSSEEQSEQAAKAMKSSAKVASVLLNSWSGLLALSTNDFQALRSIVDTLRVPSFAPRSDVIDLFFLIFQVEYSSWSESFLAGKRLTVVKNQAVSNDDNINMVNIPDGSNKKYMSLRQHFTAVLLFIFLELGLVESIVCMIRASDDPSASRKATYLLGEVLRLSDELLPIHLGAKIQSLPSLFNMASQFTAEDRFVATSVLQSIESLNRVKFHSATQPFSQTTSLLFKEQKTDGSFRGQRQVEHVKLKMGMQIDDSHFRSMLAETNVLATKNYQKWRWDTLVQIMEGPLLSPKRIDETLRTTKFMRRLLAFYKPFSNRFSSIQNTKPNQKFIKVGCLVFRTLLANPEGVKYLSESKVIKQIAESLSQIDGYSEQVSEPIFSNSRLQKTLTHGYFPMLKVLSSQKEGHAIMERWRIFTTLYHLTELRNRDDLIIIFLTNLDYRLEGHTRIIFSKALNTGQQAVRLTATKHLAALINSESANDNLNHWAISLLIFQLYDPCLEVCKTAVKVLNEVCARNENLLAQVVQLQPSLAHLGEIGSPLLLRFLATTVGFHYLSEINFIEHELDNWYHHRNIDYVDLLEQNFFLSFVSNLKIIDKKNNEPDENILPLHFYGELVKSPQGCEVLESSGHFESFMGTLVEFYDKPLGNEAIRQLKSALWAIGNIGKTDQGITFLINHDTIPLIVKYAENSLIPTVRGTAYFVLGLISRTSKGVEILESLHWYSLMSLMGTSQGICIPRHAGQVLSTPRRNVEFVNERVPTPEFSSLLSSLTNSEREVIRLVSNLSNHVLTNESARQLTKIRSKNAKVFSSKRLVKACMTILGKFHYRVQIQQFVFELFPYSVLLSSSTSQDLNESPSRPNNLSISA.

One can recognise an REM-1 domain in the interval 24 to 110 (DFIKKMNTTD…IESFQGENGE (87 aa)). A disordered region spans residues 105-128 (QGENGEAKTGSTSLTRSASATVSR). Polar residues predominate over residues 113 to 128 (TGSTSLTRSASATVSR). Ser151 is modified (phosphoserine). Positions 183–205 (NVNEKNNSSSEDTQPNGKRPSSL) are disordered. Over residues 194-205 (DTQPNGKRPSSL) the composition is skewed to polar residues. 6 consecutive transmembrane segments (helical) span residues 285-305 (LFLDATAFSCCQMLNLPWILS), 392-412 (LIDGSISENLAASAALALVYL), 504-524 (VIDLFFLIFQVEYSSWSESFL), 564-584 (TAVLLFIFLELGLVESIVCMI), 926-946 (LNHWAISLLIFQLYDPCLEVC), and 984-1004 (LLLRFLATTVGFHYLSEINFI). Thr1203 carries the phosphothreonine modification.

It belongs to the RICTOR family. The target of rapamycin complex 2 (TORC2) is composed of at least bit61, pop3/wat1, sin1, ste20 and tor1. Either Ser-203 or Ser-204 are phosphorylated as well.

It localises to the membrane. In terms of biological role, component of TORC2, which regulates multiple cellular processes to control cell growth in response to environmental signals. TORC2 is required for cell survival under various stress conditions. TORC2 positively controls G1 cell-cycle arrest, sexual development and amino acid uptake. Positively regulates amino acid uptake through the control of expression of amino acid permeases. The sequence is that of Target of rapamycin complex 2 subunit ste20 from Schizosaccharomyces pombe (strain 972 / ATCC 24843) (Fission yeast).